Here is a 230-residue protein sequence, read N- to C-terminus: Protein FAM3A (230 aa).

The signal sequence occupies residues 1-33 (MRLAGPLRIVALIIIMGLTWILVTILLGGPGVG). 2 cysteine pairs are disulfide-bonded: Cys59–Cys87 and Cys65–Cys222. Positions 68-226 (EHLSFRIVSG…LEMEGCIPRR (159 aa)) constitute a GG-type lectin domain.

The protein belongs to the FAM3 family.

It localises to the secreted. This chain is Protein FAM3A (Fam3a), found in Mus musculus (Mouse).